The chain runs to 595 residues: Cyclin-dependent kinase-like 3 (595 aa).

One can recognise a Protein kinase domain in the interval 4–286 (YETLGKVGEG…STDLLRHDYF (283 aa)). Residues 10–18 (VGEGSYGTV) and Lys33 each bind ATP. Positions 45–51 (KIATREI) match the [NKR]KIAxRE motif. Residue Asp125 is the Proton acceptor of the active site. Thr158 carries the post-translational modification Phosphothreonine. A Phosphotyrosine modification is found at Tyr160. Disordered stretches follow at residues 362-427 (VIKA…PHAG), 448-513 (SSNL…NKRK), and 551-586 (RESK…GKNL). Basic and acidic residues predominate over residues 368–386 (GKGDVPDQKKPEYEGDHRQ). Residues 387–397 (QGTADDTQPSS) show a composition bias toward polar residues. Residues 448–457 (SSNLSHPNSR) show a composition bias toward low complexity. 2 stretches are compositionally biased toward polar residues: residues 468-491 (SSQT…QVQT) and 499-509 (RTGQNDQISSG). Over residues 570–585 (NQEKQEGGDGDCEGKN) the composition is skewed to basic and acidic residues.

Belongs to the protein kinase superfamily. CMGC Ser/Thr protein kinase family. CDC2/CDKX subfamily.

It localises to the cytoplasm. It catalyses the reaction L-seryl-[protein] + ATP = O-phospho-L-seryl-[protein] + ADP + H(+). It carries out the reaction L-threonyl-[protein] + ATP = O-phospho-L-threonyl-[protein] + ADP + H(+). This is Cyclin-dependent kinase-like 3 from Mus musculus (Mouse).